Consider the following 171-residue polypeptide: LIM domain transcription factor LMO4-A (171 aa).

Polar residues predominate over residues 1-19 (MVNNRSSESTTTAVSSNGS). The segment at 1–21 (MVNNRSSESTTTAVSSNGSPP) is disordered. 2 LIM zinc-binding domains span residues 22 to 84 (KACA…LFGN) and 86 to 148 (GACN…GLLN).

In terms of tissue distribution, at the start of gastrulation (stage 10), expressed in the mesodermal marginal zone. Shortly after (stage 11), expression is down-regulated in the dorsal most region. During neurulation, expressed in the neural plate and ventral epidermis. At late neurula stages, also expressed more rostrally, and then in the brain, migrating neural crests and ventral epidermis.

Its function is as follows. Acts as a positive cofactor of GATA transcription factors to establish the identity of the ventral mesoderm during gastrulation. Down-regulation in the dorsal mesoderm is necessary for the proper formation of this territory since, when present, lmo4 may bind ldb1 and restrict the availability of this cofactor for Spemman organizer transcription factors. At neurula stages, suppresses primary neuron differentiation and modulates gene expression at the Isthmic Organizer of the midbrain-hindbrain boundary. In Xenopus laevis (African clawed frog), this protein is LIM domain transcription factor LMO4-A (lmo4-a).